Consider the following 225-residue polypeptide: Protein ERP3 (225 aa).

The signal sequence occupies residues 1–23; it reads MSNLCVLFFQFFFLAQFFAEASP. Topologically, residues 24-195 are lumenal; it reads LTFELNKGRK…STEHRIVMFS (172 aa). The 140-residue stretch at 33 to 172 folds into the GOLD domain; it reads KECLYTLTPE…LHVLERNIQY (140 aa). The segment covering 129 to 138 has biased composition (basic residues); it reads ERRKARKAQR. Residues 129–149 are disordered; sequence ERRKARKAQRNLRDSKTDPLQ. A helical transmembrane segment spans residues 196–216; that stretch reads IYGILLIIGMSCAQIAILEFI. The Cytoplasmic segment spans residues 217–225; sequence FRESRKHNV.

This sequence belongs to the EMP24/GP25L family.

The protein localises to the endoplasmic reticulum membrane. Functionally, involved in vesicular protein trafficking. This chain is Protein ERP3 (ERP3), found in Saccharomyces cerevisiae (strain ATCC 204508 / S288c) (Baker's yeast).